The sequence spans 576 residues: MSDSMLYQTLQTCLPKSRLITLWLAFTLAMLIQEPRRHAATVNAATAGGSMLGDVNISAILDSFSVSYDKRVRPNYGGPPVEVGVTMYVLSISSLSEVKMDFTLDFYFRQFWTDPRLAYRKRPGVETLSVGSEFIKNIWVPDTFFVNEKQSYFHIATTSNEFIRVHHSGSITRSIRLTITASCPMNLQYFPMDRQLCHIEIESFGYTMRDIRYKWNEGPNSVGVSSEVSLPQFKVLGHRQRAVEISLTTGNYSRLACEIQFVRSMGYYLIQIYIPSGLIVVISWVSFWLNRNATPARVALGVTTVLTMTTLMSSTNAALPKISYVKSIDVYLGTCFVMVFASLLEYATVGYMAKRIQMRKQRFMTIQKMAEQKKQQQLDGVQPPPNPNPNTMVDHGGHGHGHGHHSHGHPHVPKQTVSNRPIGFQTMQQQNIGGRGCSIVGPLFQEVRFKVHDPKAHSKGGTLENTVNGGRGGPPVGPHGPGPQGPPGGPPAGGGGGGAPPEGGDAEAAVPAHLLHPGKVKKDINKLLGITPSDIDKYSRIVFPVCFVCFNLMYWIIYLHVSDVVADDLVLLGEEK.

Positions 1-29 (MSDSMLYQTLQTCLPKSRLITLWLAFTLA) are cleaved as a signal peptide. The Extracellular portion of the chain corresponds to 30–268 (MLIQEPRRHA…IQFVRSMGYY (239 aa)). Residue asparagine 56 is glycosylated (N-linked (GlcNAc...) asparagine). Cysteines 183 and 197 form a disulfide. Residue asparagine 251 is glycosylated (N-linked (GlcNAc...) asparagine). A run of 3 helical transmembrane segments spans residues 269–289 (LIQIYIPSGLIVVISWVSFWL), 298–320 (VALGVTTVLTMTTLMSSTNAALP), and 330–350 (VYLGTCFVMVFASLLEYATVG). Residues 351–540 (YMAKRIQMRK…TPSDIDKYSR (190 aa)) are Cytoplasmic-facing. 2 disordered regions span residues 372–418 (QKKQ…QTVS) and 452–507 (HDPK…GDAE). A compositionally biased stretch (basic residues) spans 398–412 (HGHGHGHHSHGHPHV). The span at 475–490 (PVGPHGPGPQGPPGGP) shows a compositional bias: pro residues. The segment covering 491–501 (PAGGGGGGAPP) has biased composition (gly residues). The chain crosses the membrane as a helical span at residues 541-561 (IVFPVCFVCFNLMYWIIYLHV).

The protein belongs to the ligand-gated ion channel (TC 1.A.9) family. Gamma-aminobutyric acid receptor (TC 1.A.9.5) subfamily. Homomultimer.

It localises to the postsynaptic cell membrane. The protein resides in the cell membrane. GABA, an inhibitory neurotransmitter, mediates neuronal inhibition by binding to the GABA receptor and opening an integral chloride channel. This Musca domestica (House fly) protein is Gamma-aminobutyric acid receptor subunit beta.